The following is a 176-amino-acid chain: Mediator of RNA polymerase II transcription subunit 11 (176 aa).

The tract at residues 98-176 (SRVRELEETK…MGGDSSMSTN (79 aa)) is disordered. The segment covering 99 to 108 (RVRELEETKA) has biased composition (basic and acidic residues). Positions 124 to 154 (HAAAQQQQQQQQQQQQQQQQMQQAAQQQQQQ) are enriched in low complexity.

Belongs to the Mediator complex subunit 11 family. Component of the Mediator complex, which may include CDK8, MED4, MED6, MED11, MED14, MED17, MED18, MED20, MED21, MED22, MED27, MED28, MED30 and MED31.

The protein resides in the nucleus. Component of the Mediator complex, a coactivator involved in the regulated transcription of nearly all RNA polymerase II-dependent genes. Mediator functions as a bridge to convey information from gene-specific regulatory proteins to the basal RNA polymerase II transcription machinery. Mediator is recruited to promoters by direct interactions with regulatory proteins and serves as a scaffold for the assembly of a functional pre-initiation complex with RNA polymerase II and the general transcription factors. This Drosophila melanogaster (Fruit fly) protein is Mediator of RNA polymerase II transcription subunit 11 (MED11).